Consider the following 184-residue polypeptide: UPF0149 protein PP_5201 (184 aa).

Belongs to the UPF0149 family.

This is UPF0149 protein PP_5201 from Pseudomonas putida (strain ATCC 47054 / DSM 6125 / CFBP 8728 / NCIMB 11950 / KT2440).